The sequence spans 593 residues: Glyoxylate carboligase (593 aa).

It belongs to the TPP enzyme family. In terms of assembly, homotetramer. Requires Mg(2+) as cofactor. Thiamine diphosphate serves as cofactor.

The catalysed reaction is 2 glyoxylate + H(+) = 2-hydroxy-3-oxopropanoate + CO2. The protein operates within organic acid metabolism; glycolate degradation; 3-phospho-D-glycerate from glycolate: step 2/4. In terms of biological role, catalyzes the condensation of two molecules of glyoxylate to give 2-hydroxy-3-oxopropanoate (also termed tartronate semialdehyde). This is Glyoxylate carboligase (gcl) from Escherichia coli O157:H7.